We begin with the raw amino-acid sequence, 202 residues long: MRYWYLRLAVFLGALAVPAWWLYQAWIFALGPDPGKTLVDRLGLGALVLLLLTLAMTPLQKLSGWPGWIAVRRQLGLWCFTYVLLHLSAYCVFILGLDWGQLGIELSKRPYIIVGMLGFVCLFLLAITSNRFAMRKLGSRWKKLHRLVYLILGLGLLHMLWVVRADLEEWTLYAVVGASLMLLRLPSIARRLPRLRTRPGVS.

6 consecutive transmembrane segments (helical) span residues 8-28 (LAVF…AWIF), 42-62 (LGLG…LQKL), 75-95 (LGLW…VFIL), 110-130 (PYII…ITSN), 147-167 (LVYL…RADL), and 169-189 (EWTL…PSIA).

The protein belongs to the MsrQ family. As to quaternary structure, heterodimer of a catalytic subunit (MsrP) and a heme-binding subunit (MsrQ). The cofactor is FMN. Heme b is required as a cofactor.

The protein resides in the cell inner membrane. Part of the MsrPQ system that repairs oxidized periplasmic proteins containing methionine sulfoxide residues (Met-O), using respiratory chain electrons. Thus protects these proteins from oxidative-stress damage caused by reactive species of oxygen and chlorine generated by the host defense mechanisms. MsrPQ is essential for the maintenance of envelope integrity under bleach stress, rescuing a wide series of structurally unrelated periplasmic proteins from methionine oxidation. MsrQ provides electrons for reduction to the reductase catalytic subunit MsrP, using the quinone pool of the respiratory chain. In Pseudomonas aeruginosa (strain UCBPP-PA14), this protein is Protein-methionine-sulfoxide reductase heme-binding subunit MsrQ.